The sequence spans 866 residues: Protein aubergine (866 aa).

M1 carries the N-acetylmethionine modification. The segment at 1–61 (MNLPPNPVIA…GGGDAQVGPS (61 aa)) is disordered. Symmetric dimethylarginine occurs at positions 11, 13, 15, and 17. Gly residues predominate over residues 46-56 (ASGGNGGGGDA). A PAZ domain is found at 281–390 (TLYNILSDAI…IIPELARATG (110 aa)). A Piwi domain is found at 555–852 (IVMVVMRSPN…LAFLVAESIN (298 aa)).

This sequence belongs to the argonaute family. Piwi subfamily. As to quaternary structure, component of the ping-pong piRNA processing (4P) complex consisting of krimp, aub and AGO3. Interacts (via N-terminus when symmetrically dimethylated on arginine residues) with krimp (via tudor domain); this interaction requires methylation of at least one N-terminal arginie residue. Interacts with vas and AGO3. May form part of a piRNA processing complex consisting of tud, aub and AGO3. Interacts (when symmetrically dimethylated on arginine residues) with tud; methylation and/or interaction requires association with piRNA. Interacts (via N-terminus and when associated with piRNA) with csul/PRMT5; the interaction recruits the PRMT5 methylosome complex to modify N-terminal arginines by symmetrical dimethylation but involves residues other than the arginines to be modified. Forms a complex with smg, twin, AGO3, nanos mRNA and piRNAs that targets the nanos 3'-untranslated region, in early embryos. Interacts with nanos mRNA and rump (in an RNA-dependent manner). Interacts with papi and vret. Interacts with me31B. Symmetrical dimethylation of arginines (sDMA) on Arg-11, Arg-13 and/or Arg-15 by csul/PRMT5/DART5, is required for binding to tud, localization to the pole plasm and association with the correct piRNAs. SDMA on Arg-11, Arg-13, Arg-15 and/or Arg-17 is required for binding to krimp and stable recruitment to subregions of the nuage. Methylation state does not affect protein stability. SDMA plays an important role in ping-pong amplification of piRNAs and is essential for function in vivo. Methylation state functions as an indicator of its piRNA binding state. PiRNA binding promotes sDMA modification; piRNA binding induces a conformational change that exposes the N-terminal arginines, making them available to the methylosome complex. As to expression, expressed in ovary. In the germarium, found in germline stem and cyst cells. In egg chambers from stage 6, expressed both in nurse cells and oocytes. In embryos, accumulates in the pole cells, although low expression is detected throughout the entire embryo. In testis, expressed in germline stem cells, gonialblast and spermatogonia cells (at protein level). In the adult brain, expressed in the ellipsoid body, the mushroom body subdivision in the peduncle and the cell body layer. Expressed specifically in alpha'/beta' and gamma neurons.

It is found in the cytoplasm. The protein localises to the cytosol. Its subcellular location is the perinuclear region. The protein resides in the cytoplasmic ribonucleoprotein granule. In terms of biological role, component of the perinuclear meiotic nuage, a germline-specific subcellular membraneless ribonucleoprotein compartment involved in production of transposable element-repressing Piwi-interacting RNA (piRNA)-induced silencing complexes (piRISCs), which are essential for maintaining germline integrity during oogenesis; essential for the formation and/or structural integrity of nuage particles. Acts via the Piwi-interacting RNA (piRNA) metabolic process, which mediates the repression of transposable elements during meiosis by forming complexes composed of piRNAs and Piwi proteins and governs the methylation and subsequent repression of transposons. Directly binds piRNAs, a class of 24 to 30 nucleotide RNAs that are generated by a Dicer-independent mechanism and are primarily derived from transposons and other repeated sequence elements. Shows RNA cleavage or slicer activity; including aub-piRNA complexes from ovary and testis. When loaded with guide piRNAs recognizes and cleaves complementary RNAs to repress their expression and produce complementary piRNAs. Together with Piwi protein AGO3 recruited to subregions of the perinuclear nuage by krimp, which coordinates their activity in the ping-pong amplification step of secondary piRNA biogenesis. Krimp recruits piRNA bound aub and unbound AGO3, bringing them into close proximity to facilitate the loading onto AGO3 of freshly cut piRNAs generated by aub cleavage of target sequences; krimp recognizes the piRNA loading state of the Piwi proteins via symmetrically dimethylated arginine modification in their N-terminus. Important for asymmetric ping-pong amplification to bias production towards antisense piRNAs capable of silencing transposable elements. Required for the localization of mael and krimp to the meiotic nuage. In ovary, associates predominantly with antisense piRNAs that contain uridine at their 5' end. In testis, associates with Su(Ste) antisense piRNAs (most abundant class of piRNAs found in complex with aub in testes) and negatively regulates Ste expression, most likely by cleaving its transcripts. Also in testis, may repress translation of vas when associated with a piRNA derived from chromosome X, termed AT-chX-1, whose sequence shows strong complementarity to vas mRNA. Involved in repression of long interspersed nuclear elements (LINEs) including HeT-A, I-element and TART LINEs. Repression of specialized telomeric retroelements HeT-A and TART is involved in telomere regulation; Drosophila telomeres being maintained by transposition of specialized telomeric retroelements. Also involved in telomeric trans-silencing, a repression mechanism by which a transposon or a transgene inserted in subtelomeric heterochromatin has the capacity to repress in trans, in the female germline, a homologous transposon, or transgene located in euchromatin. Involved in the suppression of meiotic drive of sex chromosomes and autosomes. Involved in transposon silencing in the adult brain. Required for dorsal-ventral as well as anterior-posterior patterning of the egg. Required during oogenesis for primordial germ cell formation and activation of RNA interference. During early oogenesis, required for osk mRNA silencing and polarization of the microtubule cytoskeleton. During mid-oogenesis, required for osk mRNA localization to the posterior pole and efficient translation of osk and grk. During embryogenesis, required for posterior localization of nanos (nos) mRNA, independently of osk, and pole cell formation. Forms a complex with smg, twin, AGO3 and specific piRNAs that targets nanos mRNA (and probably other maternal mRNAS) for deadenylation promoting its decay during early embryogenesis. This chain is Protein aubergine, found in Drosophila melanogaster (Fruit fly).